Consider the following 491-residue polypeptide: ATP synthase subunit beta, chloroplastic (491 aa).

Residue 172–179 coordinates ATP; sequence GGAGVGKT.

This sequence belongs to the ATPase alpha/beta chains family. In terms of assembly, F-type ATPases have 2 components, CF(1) - the catalytic core - and CF(0) - the membrane proton channel. CF(1) has five subunits: alpha(3), beta(3), gamma(1), delta(1), epsilon(1). CF(0) has four main subunits: a(1), b(1), b'(1) and c(9-12).

The protein resides in the plastid. Its subcellular location is the chloroplast thylakoid membrane. It carries out the reaction ATP + H2O + 4 H(+)(in) = ADP + phosphate + 5 H(+)(out). Its function is as follows. Produces ATP from ADP in the presence of a proton gradient across the membrane. The catalytic sites are hosted primarily by the beta subunits. The protein is ATP synthase subunit beta, chloroplastic of Pisum sativum (Garden pea).